The sequence spans 47 residues: uncharacterized protein (47 aa).

Residues 28-45 (VMIWGCLPYFLYVLIRMF) form a helical membrane-spanning segment.

Its subcellular location is the cell membrane. This is an uncharacterized protein from Bacillus subtilis (strain 168).